Consider the following 46-residue polypeptide: Toxin PhcrTx2 (46 aa).

Cystine bridges form between Cys4-Cys40, Cys6-Cys32, and Cys22-Cys41.

The protein belongs to the sea anemone type 3 (BDS) potassium channel toxin family.

It localises to the secreted. The protein resides in the nematocyst. Functionally, neurotoxin that induces paralysis (but not death) to U.thayeri crabs. Partially and reversibly inhibits glutamate-evoked peak currents (IC(50)=4.7 uM) but not voltage-gated potassium channel currents in cultured isolated neurons from the land snail H.aspersa. Weakly inhibits voltage-gated potassium peak currents (IC(50)=6.4 uM) and steady-state currents (IC(50)=8.2 uM) in rat dorsal root ganglion (DRG) neurons. Weakly inhibits voltage-gated sodium currents in rat DRG neurons (IC(50)=0.9 uM). The protein is Toxin PhcrTx2 of Phymanthus crucifer (Red beaded anemone).